The primary structure comprises 285 residues: CCR4-NOT transcription complex subunit 7 (285 aa).

5 residues coordinate a divalent metal cation: D40, E42, D161, D230, and E278.

Belongs to the CAF1 family. Component of the CCR4-NOT complex. Mn(2+) is required as a cofactor. Requires Mg(2+) as cofactor. The cofactor is Co(2+).

Its subcellular location is the nucleus. It is found in the cytoplasm. It catalyses the reaction Exonucleolytic cleavage of poly(A) to 5'-AMP.. Has 3'-5' poly(A) exoribonuclease activity for synthetic poly(A) RNA substrate. Catalytic component of the CCR4-NOT complex which is one of the major cellular mRNA deadenylases and is linked to various cellular processes including bulk mRNA degradation, miRNA-mediated repression, translational repression during translational initiation and general transcription regulation. During miRNA-mediated repression the complex also seems to act as translational repressor during translational initiation. Additional complex functions may be a consequence of its influence on mRNA expression. The protein is CCR4-NOT transcription complex subunit 7 (cnot7) of Xenopus tropicalis (Western clawed frog).